We begin with the raw amino-acid sequence, 295 residues long: Aspartate carbamoyltransferase catalytic subunit (295 aa).

The carbamoyl phosphate site is built by Arg54 and Thr55. Lys82 serves as a coordination point for L-aspartate. Positions 104, 132, and 135 each coordinate carbamoyl phosphate. L-aspartate contacts are provided by Arg165 and Arg218. 2 residues coordinate carbamoyl phosphate: Gly257 and Pro258.

The protein belongs to the aspartate/ornithine carbamoyltransferase superfamily. ATCase family. As to quaternary structure, heterododecamer (2C3:3R2) of six catalytic PyrB chains organized as two trimers (C3), and six regulatory PyrI chains organized as three dimers (R2).

The enzyme catalyses carbamoyl phosphate + L-aspartate = N-carbamoyl-L-aspartate + phosphate + H(+). It functions in the pathway pyrimidine metabolism; UMP biosynthesis via de novo pathway; (S)-dihydroorotate from bicarbonate: step 2/3. Functionally, catalyzes the condensation of carbamoyl phosphate and aspartate to form carbamoyl aspartate and inorganic phosphate, the committed step in the de novo pyrimidine nucleotide biosynthesis pathway. The polypeptide is Aspartate carbamoyltransferase catalytic subunit (Wolbachia pipientis subsp. Culex pipiens (strain wPip)).